Reading from the N-terminus, the 504-residue chain is MSFSVDVLANIAIELQRGIGHQDRFQRLITTLRQVLECDASALLRYDSRQFIPLAIDGLAKDVLGRRFALEGHPRLEAIARAGDVVRFPADSELPDPYDGLIPGQESLKVHACVGLPLFAGQNLIGALTLDGMQPDQFDVFSDEELRLIAALAAGALSNALLIEQLESQNMLPGDAAPFEAVKQTQMIGLSPGMTQLKKEIEIVAASDLNVLISGETGTGKELVAKAIHEASPRAVNPLIYLNCAALPESVAESELFGHVKGAFTGAISNRSGKFEMADNGTLFLDEIGELSLALQAKLLRVLQYGDIQRVGDDRSLRVDVRVLAATNRDLREEVLAGRFRADLFHRLSVFPLSVPPLRERGDDVILLAGYFCEQCRLRLGLSRVVLSAGARNLLQHYSFPGNVRELEHAIHRAVVLSRATRSGDEVILEAQHFAFPEVTLPPPEAAAVPVVKQNLREATEAFQRETIRQALAQNHHNWAACARMLETDVANLHRLAKRLGLKD.

Aspartate 57 carries the 4-aspartylphosphate modification. The region spanning 187 to 416 (MIGLSPGMTQ…LEHAIHRAVV (230 aa)) is the Sigma-54 factor interaction domain. ATP is bound by residues 215–222 (GETGTGKE) and 278–287 (ADNGTLFLDE). Positions 479-498 (WAACARMLETDVANLHRLAK) form a DNA-binding region, H-T-H motif.

It functions in the pathway nitrogen metabolism; nitric oxide reduction. In terms of biological role, required for the expression of anaerobic nitric oxide (NO) reductase, acts as a transcriptional activator for at least the norVW operon. Activation also requires sigma-54. The sequence is that of Anaerobic nitric oxide reductase transcription regulator NorR from Escherichia coli (strain SE11).